The primary structure comprises 363 residues: Chorismate synthase (363 aa).

Arg48 and Arg54 together coordinate NADP(+). Residues 125 to 127 (RSS), 237 to 238 (NA), Gly277, 292 to 296 (KPTSS), and Arg318 contribute to the FMN site.

Belongs to the chorismate synthase family. Homotetramer. Requires FMNH2 as cofactor.

The enzyme catalyses 5-O-(1-carboxyvinyl)-3-phosphoshikimate = chorismate + phosphate. It functions in the pathway metabolic intermediate biosynthesis; chorismate biosynthesis; chorismate from D-erythrose 4-phosphate and phosphoenolpyruvate: step 7/7. In terms of biological role, catalyzes the anti-1,4-elimination of the C-3 phosphate and the C-6 proR hydrogen from 5-enolpyruvylshikimate-3-phosphate (EPSP) to yield chorismate, which is the branch point compound that serves as the starting substrate for the three terminal pathways of aromatic amino acid biosynthesis. This reaction introduces a second double bond into the aromatic ring system. The protein is Chorismate synthase of Pseudomonas savastanoi pv. phaseolicola (strain 1448A / Race 6) (Pseudomonas syringae pv. phaseolicola (strain 1448A / Race 6)).